The sequence spans 86 residues: Small ribosomal subunit protein bS20 (86 aa).

The segment covering 1 to 11 (MANHKSALKRA) has biased composition (basic residues). A disordered region spans residues 1–27 (MANHKSALKRARQNEERRIRNRARKTR).

It belongs to the bacterial ribosomal protein bS20 family.

In terms of biological role, binds directly to 16S ribosomal RNA. This Syntrophobacter fumaroxidans (strain DSM 10017 / MPOB) protein is Small ribosomal subunit protein bS20.